The following is a 105-amino-acid chain: U1-sicaritoxin-Li1b (105 aa).

Positions 1-19 (MKLLFEGLLVLVLIAFVVA) are cleaved as a signal peptide. Residues 20 to 36 (EFESDAEKWEALITQER) constitute a propeptide that is removed on maturation. Intrachain disulfides connect Cys-38/Cys-55, Cys-46/Cys-60, Cys-54/Cys-73, and Cys-62/Cys-71. Position 82 is an arginine amide (Arg-82). Positions 86–105 (ALMVDPETHRMLSLHRLSEE) are excised as a propeptide.

The protein belongs to the neurotoxin 28 (Litx) family. In terms of tissue distribution, expressed by the venom gland.

It localises to the secreted. In terms of biological role, toxin active against insects (S.frugiperda larvae). May act on sodium (Nav) or calcium (Cav) channels. This is U1-sicaritoxin-Li1b from Loxosceles intermedia (Brown spider).